We begin with the raw amino-acid sequence, 900 residues long: MKASEEEYRLNFFIKNDFKRKICKSCKTPFWTRDEKKEYCSDIPCTDYYFFDINIKSQPLTVKEAREKFLSFFEKRGHTRISPKPVLARWREDLYLTIASIVDFQPHVTSGLVPPPANPLVVSQPSIRLEDIDNVGITFGRHLTTFEMAAHHAFNYPDHYVYWKEETTAYATEFFTKELGIPEEELNFKESWWEGGGNAGPCLEVTVGGLELATLVFMQYKITDNGNYTPLKLKIVDTGYGVERIAWITQKTPSAFHAIYGNLVYKFFNKIGVAYIDETLLKVASRFAGKIDPDNPDTIKIHRQMVSKELGIDIKAVEEELDRAAKVFQILDHTKTIMLMLADGLVPSNSGEGYLGRLVIRRALKVLRLLKSDVRLYELVKEQIDFWKEDFPQVLKNKDYILDAVELEQQRFEKILEKVPSIASTLARKSEITTEDLIQVYDSNGIPPDLLEEELKKKSVKFELPRNFYALVAKRHQTSTIKSAYDKVKLPKDMLEYITALQPTEKLYYKDQYMRSFEGKVLGVYKNYLILDKTTFYPEGGGQLGDTGLIIDEKSSKRYEVIDTQKVNDVIVHILKEEPSTIKVGDNVRGEINWERRYRLMRHHTVTHVILAAAKKVLGEHVWQAGAEKTPEKGRLDITHHKTLTEEEVKLIENYANSVISDRRPVKPLEMNRMEAEMKYGVSIYEGGVPNSATIRLLEIKDWDIESCGGTHVSNTSEIGAVKIINVERIQDGVIRLEYVAGPALVDYIRETEAKIVEASKIIGSSPDQLTSRLRRILNEIEEKNNLIIQYRRIIETELLNNLKPYEINGNKIYIIEGLGDEEENKEILRKLTSTDNTIAISISDNRLQIATSKNMRVDKIVEELLKGGGKGGGKGTFANVILNSKKSKEEIIEIVRKSL.

4 residues coordinate Zn(2+): histidine 604, histidine 608, cysteine 708, and histidine 712.

The protein belongs to the class-II aminoacyl-tRNA synthetase family. Requires Zn(2+) as cofactor.

The protein localises to the cytoplasm. The catalysed reaction is tRNA(Ala) + L-alanine + ATP = L-alanyl-tRNA(Ala) + AMP + diphosphate. In terms of biological role, catalyzes the attachment of alanine to tRNA(Ala) in a two-step reaction: alanine is first activated by ATP to form Ala-AMP and then transferred to the acceptor end of tRNA(Ala). Also edits incorrectly charged Ser-tRNA(Ala) and Gly-tRNA(Ala) via its editing domain. The polypeptide is Alanine--tRNA ligase (Saccharolobus islandicus (strain M.16.27) (Sulfolobus islandicus)).